The chain runs to 162 residues: Caveolin-2 (162 aa).

The Cytoplasmic portion of the chain corresponds to 1 to 86 (MGLETEKADV…FEISKYVMYK (86 aa)). Tyr-19 is modified (phosphotyrosine; by SRC). Phosphoserine occurs at positions 20 and 23. At Tyr-27 the chain carries Phosphotyrosine; by SRC. A Phosphoserine modification is found at Ser-36. The segment at residues 87–107 (FLTVFLAIPLAFIAGILFATL) is an intramembrane region (helical). Residues 108–162 (SCLHIWILMPFVKTCLMVLPSVQTIWKSVTDVIIAPLCTSVGRCFSSVSLQLSQD) lie on the Cytoplasmic side of the membrane.

The protein belongs to the caveolin family. In terms of assembly, monomer or homodimer. Interacts with CAV1; the interaction forms a stable heterooligomeric complex that is required for targeting to lipid rafts and for caveolae formation. Tyrosine phosphorylated forms do not form heterooligomers with the Tyr-19-phosphorylated form existing as a monomer or dimer, and the Tyr-27-form as a monomer only. Interacts (tyrosine phosphorylated form) with the SH2 domain-containing proteins, RASA1, NCK1 and SRC. Interacts (tyrosine phosphorylated form) with INSR, the interaction (Tyr-27-phosphorylated form) is increased on insulin stimulation. Interacts (Tyr-19 phosphorylated form) with MAPK1 (phosphorylated form); the interaction, promoted by insulin, leads to nuclear location and MAPK1 activation. Interacts with STAT3; the interaction is increased on insulin-induced tyrosine phosphorylation leading to STAT activation. In terms of processing, phosphorylated on serine and tyrosine residues. CAV1 promotes phosphorylation on Ser-23 which then targets the complex to the plasma membrane, lipid rafts and caveolae. Phosphorylation on Ser-36 appears to modulate mitosis in endothelial cells. Phosphorylation on both Tyr-19 and Tyr-27 is required for insulin-induced 'Ser-727' phosphorylation of STAT3 and its activation. Phosphorylation on Tyr-19 is required for insulin-induced phosphorylation of MAPK1 and DNA binding of STAT3. Tyrosine phosphorylation is induced by both EGF and insulin (By. similarity).

Its subcellular location is the nucleus. The protein localises to the cytoplasm. It is found in the golgi apparatus membrane. The protein resides in the cell membrane. It localises to the membrane. Its subcellular location is the caveola. In terms of biological role, may act as a scaffolding protein within caveolar membranes. Interacts directly with G-protein alpha subunits and can functionally regulate their activity. Acts as an accessory protein in conjunction with CAV1 in targeting to lipid rafts and driving caveolae formation. The Ser-36 phosphorylated form has a role in modulating mitosis in endothelial cells. Positive regulator of cellular mitogenesis of the MAPK signaling pathway. Required for the insulin-stimulated nuclear translocation and activation of MAPK1 and STAT3, and the subsequent regulation of cell cycle progression. In Pan troglodytes (Chimpanzee), this protein is Caveolin-2 (CAV2).